Here is a 205-residue protein sequence, read N- to C-terminus: N-(5'-phosphoribosyl)anthranilate isomerase (205 aa).

The protein belongs to the TrpF family.

The catalysed reaction is N-(5-phospho-beta-D-ribosyl)anthranilate = 1-(2-carboxyphenylamino)-1-deoxy-D-ribulose 5-phosphate. The protein operates within amino-acid biosynthesis; L-tryptophan biosynthesis; L-tryptophan from chorismate: step 3/5. The polypeptide is N-(5'-phosphoribosyl)anthranilate isomerase (Marinomonas sp. (strain MWYL1)).